Here is a 52-residue protein sequence, read N- to C-terminus: Thiocillin (52 aa).

Residues 1–38 constitute a propeptide that is removed on maturation; that stretch reads MSEIKKALNTLEIEDFDAIEMVDVDAMPENEALEIMGA. The segment at residues 39–40 is a cross-link (thiazole-4-carboxylic acid (Ser-Cys)); the sequence is SC. The segment at residues 39-47 is a cross-link (pyridine-2,5-dicarboxylic acid (Ser-Cys) (with S-48)); that stretch reads SCTTCVCTC. Positions 39–48 form a cross-link, pyridine-2,5-dicarboxylic acid (Ser-Ser) (with C-47); sequence SCTTCVCTCS. A (Z)-2,3-didehydrobutyrine modification is found at Thr-42. Positions 42–43 form a cross-link, thiazole-4-carboxylic acid (Thr-Cys); that stretch reads TC. The residue at position 44 (Val-44) is a 3-hydroxyvaline (Val); partial. Positions 44–45 form a cross-link, thiazole-4-carboxylic acid (Val-Cys); sequence VC. At Thr-46 the chain carries O-methylthreonine; partial. Positions 46-47 form a cross-link, thiazole-4-carboxylic acid (Thr-Cys); it reads TC. The segment at residues 48–49 is a cross-link (thiazole-4-carboxylic acid (Ser-Cys)); the sequence is SC. Positions 49-50 form a cross-link, thiazole-4-carboxylic acid (Cys-Cys); that stretch reads CC. (Z)-2,3-didehydrobutyrine is present on Thr-51. Thr-52 carries the post-translational modification 1-amino-2-propanone; alternate. A Decarboxylated threonine; alternate modification is found at Thr-52.

This sequence belongs to the thiocillin family. Maturation of thiazole and oxazole containing antibiotics involves the enzymatic condensation of a Cys, Ser or Thr with the alpha-carbonyl of the preceding amino acid to form a thioether or ether bond, then dehydration to form a double bond with the alpha-amino nitrogen. Thiazoline or oxazoline ring are dehydrogenated to form thiazole or oxazole rings. Post-translationally, maturation of pyridinyl containing antibiotics involves the cross-linking of a Ser and a Cys-Ser pair usually separated by 7 or 8 residues along the peptide chain. The Ser residues are dehydrated to didehydroalanines, then bonded between their beta carbons. The alpha carbonyl of the Cys condenses with alpha carbon of the first Ser to form a pyridinyl ring. The ring may be multiply dehydrogenated to form a pyridine ring with loss of the amino nitrogen of the first Ser. In terms of processing, the 8 possible modification isomers, differing in the presence of modifications at three positions, have been characterized in PubMed:19196969. Val-44 is modified to 3-hydroxyvaline in forms thiocillin I, thiocillin II, YM-266183, and YM-266184. Thr-46 is modified to O-methylthreonine in forms thiocillin II, thiocillin III, thiocillin IV, and YM-266184. Thr-52 is decarboxylated to (R)-1-aminopropan-2-ol in forms micrococcin P1, thiocillin I, thiocillin II, and thiocillin III. Thr-52 is decarboxylated and oxidized to 1-amino-2-propanone in forms micrococcin P2, YM-266183, YM-266184. and thiocillin IV. The structure of 2,3-didehydrobutyrines is not discussed in PubMed:19196969. However, in Fig. 3 the residues are diagrammed as Z-isomers.

The protein resides in the secreted. Functionally, has bacteriocidal activity against Gram-positive bacteria, but not against Gram-negative bacteria. Inhibits bacterial protein biosynthesis by acting on the elongation factor Tu (EF-Tu). This chain is Thiocillin, found in Bacillus cereus (strain ATCC 14579 / DSM 31 / CCUG 7414 / JCM 2152 / NBRC 15305 / NCIMB 9373 / NCTC 2599 / NRRL B-3711).